A 376-amino-acid chain; its full sequence is Proton extrusion protein PxcA (376 aa).

Transmembrane regions (helical) follow at residues Thr150–Met170, Ala251–Ile271, Ile299–Leu319, and Phe334–Ile354.

It belongs to the CemA family.

The protein localises to the cell inner membrane. Required for H(+) efflux immediately after light irradiation to form a rapid H(+) concentration gradient across the thylakoid membranes. Together with PxcL, contributes to transient H(+) uptake following dark to light transition. In Prochlorococcus marinus (strain MIT 9303), this protein is Proton extrusion protein PxcA.